The chain runs to 190 residues: dCTP deaminase, dUMP-forming (190 aa).

Residues 101 to 106, D119, 127 to 129, Q148, Y162, and Q174 each bind dCTP; these read KSSLGR and TLE. The active-site Proton donor/acceptor is E129. Residues 163–190 form a disordered region; sequence GSTRVGSKYQGQRGPTPSRSYQNFITST. A compositionally biased stretch (polar residues) spans 171 to 190; the sequence is YQGQRGPTPSRSYQNFITST.

The protein belongs to the dCTP deaminase family. As to quaternary structure, homotrimer.

The enzyme catalyses dCTP + 2 H2O = dUMP + NH4(+) + diphosphate. It participates in pyrimidine metabolism; dUMP biosynthesis; dUMP from dCTP: step 1/1. In terms of biological role, bifunctional enzyme that catalyzes both the deamination of dCTP to dUTP and the hydrolysis of dUTP to dUMP without releasing the toxic dUTP intermediate. The sequence is that of dCTP deaminase, dUMP-forming from Mycolicibacterium paratuberculosis (strain ATCC BAA-968 / K-10) (Mycobacterium paratuberculosis).